Consider the following 856-residue polypeptide: Structure-specific endonuclease subunit SLX4 (856 aa).

Residues 1 to 19 (MDNAAIASQSNTPPSNGRS) are compositionally biased toward polar residues. Disordered stretches follow at residues 1–24 (MDNA…ARFV), 38–65 (VIEP…SHKI), 88–121 (VDSP…HKMA), 139–202 (KTRK…DNEL), 296–326 (GIQT…KKPQ), 362–392 (KKMG…GNGP), 621–640 (SKSS…SQGD), 668–689 (RLAK…NEGP), and 715–742 (DSVG…QDCD). Low complexity predominate over residues 51 to 60 (STLLTSLSKS). The segment covering 139 to 152 (KTRKKKAATAKRTR) has biased composition (basic residues). A compositionally biased stretch (polar residues) spans 296–309 (GIQTPTESRPATND). The span at 673–686 (SVKSQEPKSFSLSN) shows a compositional bias: polar residues.

The protein belongs to the SLX4 family. Forms a heterodimer with SLX1. In terms of processing, phosphorylated in response to DNA damage.

It localises to the nucleus. Its function is as follows. Regulatory subunit of the SLX1-SLX4 structure-specific endonuclease that resolves DNA secondary structures generated during DNA repair and recombination. Has endonuclease activity towards branched DNA substrates, introducing single-strand cuts in duplex DNA close to junctions with ss-DNA. The chain is Structure-specific endonuclease subunit SLX4 from Blastomyces gilchristii (strain SLH14081) (Blastomyces dermatitidis).